A 201-amino-acid chain; its full sequence is Large ribosomal subunit protein uL4 (201 aa).

The segment at 42 to 67 (GNSAQKTRSEVSGGGKKPWNQKGTGR) is disordered.

The protein belongs to the universal ribosomal protein uL4 family. Part of the 50S ribosomal subunit.

In terms of biological role, one of the primary rRNA binding proteins, this protein initially binds near the 5'-end of the 23S rRNA. It is important during the early stages of 50S assembly. It makes multiple contacts with different domains of the 23S rRNA in the assembled 50S subunit and ribosome. Forms part of the polypeptide exit tunnel. The sequence is that of Large ribosomal subunit protein uL4 from Legionella pneumophila (strain Paris).